We begin with the raw amino-acid sequence, 203 residues long: MEIISSKRFILLTLATSSFLTSNTLCSDELMMPHFHSKEGYGKYYQLRGIPKGVKERSVTFQELKDWGAKKDIKMSPAPANKVPHSAANLPLRFGRNIEDRRSPRARANMEAGTMSHFPSLPQRFGRTTARRITKTLAGLPQKSLHSLASSELLYAMTRQHQEIQSPGQEQPRKRVFTETDDAERKQEKIGNLQPVLQGAMKL.

An N-terminal signal peptide occupies residues 1-26; sequence MEIISSKRFILLTLATSSFLTSNTLC. The propeptide occupies 27 to 57; it reads SDELMMPHFHSKEGYGKYYQLRGIPKGVKER. The residue at position 94 (Phe-94) is a Phenylalanine amide. Residues 97–106 constitute a propeptide that is removed on maturation; sequence NIEDRRSPRA. Residue Phe-125 is modified to Phenylalanine amide. Positions 128-203 are excised as a propeptide; sequence TTARRITKTL…QPVLQGAMKL (76 aa). Residues 161–186 form a disordered region; it reads HQEIQSPGQEQPRKRVFTETDDAERK. The span at 171–186 shows a compositional bias: basic and acidic residues; the sequence is QPRKRVFTETDDAERK.

It belongs to the FARP (FMRFamide related peptide) family. In terms of tissue distribution, isoform 1 is expressed at high levels in the hypothalamus and eye. Isoform 2 is specifically expressed in a region between the dorsomedial hypothalamic and ventromedial hypothalamic nuclei.

It localises to the secreted. Efficiently inhibits forskolin-induced production of cAMP. Acts as a potent negative regulator of gonadotropin synthesis and secretion. Induces secretion of prolactin. Functionally, efficiently inhibits forskolin-induced production of cAMP. Blocks morphine-induced analgesia. The chain is Pro-FMRFamide-related neuropeptide VF (Npvf) from Rattus norvegicus (Rat).